The sequence spans 326 residues: DNA repair protein XRCC4 (326 aa).

Residues 1 to 212 (MERKVSRIYL…QLEESTKPER (212 aa)) are interaction with IFFO1. Ser53 is subject to Phosphoserine; by PRKDC. 2 coiled-coil regions span residues 131–165 (LDTITEKQAKNEHLQKENERLLRDWNDVQGRFEKC) and 185–209 (NEKKTKIRSLHKLLNEVQQLEESTK). Residues 180–211 (FILVLNEKKTKIRSLHKLLNEVQQLEESTKPE) form an interaction with LIG4 region. Phosphoserine; by PRKDC is present on Ser193. Positions 203–326 (QLEESTKPER…RNSSPEDLFD (124 aa)) are disordered. The segment covering 206 to 226 (ESTKPERENPCSDKTPEEHGL) has biased composition (basic and acidic residues). Position 227 is a phosphotyrosine (Tyr227). Ser230 is subject to Phosphoserine. The residue at position 231 (Thr231) is a Phosphothreonine. Position 235 is a phosphoserine (Ser235). Thr244 is modified (phosphothreonine). Phosphoserine is present on Ser250. Ser254 carries the phosphoserine; by PRKDC modification. The Nuclear localization signal signature appears at 264–269 (RKRRHR). Lys290 participates in a covalent cross-link: Glycyl lysine isopeptide (Lys-Gly) (interchain with G-Cter in ubiquitin). Ser295 carries the phosphoserine; by PRKDC modification. Ser296 carries the post-translational modification Phosphoserine. Phosphoserine; by PRKDC occurs at positions 307 and 312. The segment covering 307-326 (SAENMSLETLRNSSPEDLFD) has biased composition (polar residues). A Phosphothreonine; by PRKDC modification is found at Thr315. Ser319 and Ser320 each carry phosphoserine; by PRKDC.

Belongs to the XRCC4-XLF family. XRCC4 subfamily. In terms of assembly, homodimer and homotetramer in solution. Interacts with NHEJ1/XLF; the interaction is direct and is mediated via a head-to-head interaction between N-terminal head regions. Interacts with LIG4; the LIG4-XRCC4 subcomplex has a 1:2 stoichiometry and XRCC4 is required for LIG4 stability. Component of the core long-range non-homologous end joining (NHEJ) complex (also named DNA-PK complex) composed of PRKDC, LIG4, XRCC4, XRCC6/Ku70, XRCC5/Ku86 and NHEJ1/XLF. Additional component of the NHEJ complex includes PAXX. Following autophosphorylation, PRKDC dissociates from DNA, leading to formation of the short-range NHEJ complex, composed of LIG4, XRCC4, XRCC6/Ku70, XRCC5/Ku86 and NHEJ1/XLF. Interacts with PRKDC; the interaction is direct. Interacts with XRCC6/Ku70; the interaction is direct. Interacts with APTX and APLF. Forms a heterotetramer with IFFO1; the interaction involves LIG4-free XRCC4 and leads to the relocalization of IFFO1 to the sites of DNA damage. Interacts with PNKP; mainly interacts with PNKP when phosphorylated at Thr-231, but is also able to interact at much lower level with PNKP when not unphosphorylated. Interacts with POLL (DNA polymerase lambda). Interacts with XKR4; interacts with the processed form of XKR4, which is cleaved by caspase. Phosphorylated by PRKDC at the C-terminus in response to DNA damage; Ser-254 and Ser-312 constitute the main phosphorylation sites. Phosphorylation by PRKDC at the C-terminus of XRCC4 and NHEJ1/XLF are highly redundant and regulate ability of the XRCC4-NHEJ1/XLF subcomplex to bridge DNA. Phosphorylation by PRKDC does not prevent interaction with NHEJ1/XLF but disrupts ability to bridge DNA and promotes detachment from DNA. Phosphorylation at Ser-319 and Ser-320 by PRKDC promotes recognition by the SCF(FBXW7) complex and subsequent ubiquitination via 'Lys-63'-linked ubiquitin. Phosphorylation at Thr-231 by CK2 promotes interaction with PNKP; regulating PNKP activity and localization to DNA damage sites. Phosphorylation by CK2 promotes interaction with APTX. Post-translationally, ubiquitinated at Lys-290 by the SCF(FBXW7) complex via 'Lys-63'-linked ubiquitination, thereby promoting double-strand break repair: the SCF(FBXW7) complex specifically recognizes XRCC4 when phosphorylated at Ser-319 and Ser-320 by PRKDC, and 'Lys-63'-linked ubiquitination facilitates DNA non-homologous end joining (NHEJ) by enhancing association with XRCC5/Ku80 and XRCC6/Ku70. Monoubiquitinated. In terms of processing, undergoes proteolytic processing by caspase-3 (CASP3). This generates the protein XRCC4, C-terminus (XRCC4/C), which translocates to the cytoplasm and activates phospholipid scramblase activity of XKR4, thereby promoting phosphatidylserine exposure on apoptotic cell surface.

It is found in the nucleus. The protein resides in the chromosome. The protein localises to the cytoplasm. DNA non-homologous end joining (NHEJ) core factor, required for double-strand break repair and V(D)J recombination. Acts as a scaffold protein that regulates recruitment of other proteins to DNA double-strand breaks (DSBs). Associates with NHEJ1/XLF to form alternating helical filaments that bridge DNA and act like a bandage, holding together the broken DNA until it is repaired. The XRCC4-NHEJ1/XLF subcomplex binds to the DNA fragments of a DSB in a highly diffusive manner and robustly bridges two independent DNA molecules, holding the broken DNA fragments in close proximity to one other. The mobility of the bridges ensures that the ends remain accessible for further processing by other repair factors. Plays a key role in the NHEJ ligation step of the broken DNA during DSB repair via direct interaction with DNA ligase IV (LIG4): the LIG4-XRCC4 subcomplex reseals the DNA breaks after the gap filling is completed. XRCC4 stabilizes LIG4, regulates its subcellular localization and enhances LIG4's joining activity. Binding of the LIG4-XRCC4 subcomplex to DNA ends is dependent on the assembly of the DNA-dependent protein kinase complex DNA-PK to these DNA ends. Promotes displacement of PNKP from processed strand break termini. Its function is as follows. Acts as an activator of the phospholipid scramblase activity of XKR4. This form, which is generated upon caspase-3 (CASP3) cleavage, translocates into the cytoplasm and interacts with XKR4, thereby promoting phosphatidylserine scramblase activity of XKR4 and leading to phosphatidylserine exposure on apoptotic cell surface. The polypeptide is DNA repair protein XRCC4 (Mus musculus (Mouse)).